A 353-amino-acid chain; its full sequence is 3'(2'),5'-bisphosphate nucleotidase 1 (353 aa).

Asp-46 acts as the Proton acceptor in catalysis. The Mg(2+) site is built by Glu-71, Asp-134, Ile-136, and Asp-137. Thr-139 acts as the Proton acceptor in catalysis. Positions 139, 235, 259, 262, 276, and 288 each coordinate adenosine 3',5'-bisphosphate. Positions 235, 259, 262, 276, and 288 each coordinate AMP. Mg(2+) is bound at residue Asp-288.

The protein belongs to the inositol monophosphatase superfamily. Mg(2+) is required as a cofactor. In terms of tissue distribution, expressed in roots, leaves, stems, flowers and siliques.

The catalysed reaction is 3'-phosphoadenylyl sulfate + H2O = adenosine 5'-phosphosulfate + phosphate. It carries out the reaction adenosine 3',5'-bisphosphate + H2O = AMP + phosphate. The enzyme catalyses adenosine 2',5'-bisphosphate + H2O = AMP + phosphate. It catalyses the reaction 1D-myo-inositol 1,4-bisphosphate + H2O = 1D-myo-inositol 4-phosphate + phosphate. The catalysed reaction is 1D-myo-inositol 1,3,4-trisphosphate + H2O = 1D-myo-inositol 3,4-bisphosphate + phosphate. Its pathway is signal transduction; phosphatidylinositol signaling pathway. Inhibited non-competitively by Li(+) (IC(50)=0.20 mM) and Na(+) (IC(50)=200 mM). Phosphatase that converts adenosine 3'-phosphate 5'-phosphosulfate (PAPS) to adenosine 5'-phosphosulfate (APS) and 3'(2')-phosphoadenosine 5'-phosphate (PAP) to AMP. May regulate the flux of sulfur in the sulfur-activation pathway by converting PAPS to APS. May play a role in the biosynthesis of sulfate conjugates and RNA processing. Is also able to hydrolyze inositol 1,4-bisphosphate and inositol 1,3,4-trisphosphate. Could be considered as a negative regulator of abscisic acid (ABA)- and stress-responsive genes, through modulating the inositol 1,4,5-trisphosphate (IP3) turnover. Is also involved in salt tolerance. Acts as a suppressor of virus- and transgene-induced silencing. The sequence is that of 3'(2'),5'-bisphosphate nucleotidase 1 from Arabidopsis thaliana (Mouse-ear cress).